The following is a 227-amino-acid chain: PKHD-type hydroxylase BURPS668_A1690 (227 aa).

The Fe2OG dioxygenase domain maps to 78 to 178 (KVFPPLFNRY…RVASFFWIQS (101 aa)). Positions 96, 98, and 159 each coordinate Fe cation. Arg169 lines the 2-oxoglutarate pocket.

Fe(2+) is required as a cofactor. The cofactor is L-ascorbate.

The chain is PKHD-type hydroxylase BURPS668_A1690 from Burkholderia pseudomallei (strain 668).